The chain runs to 273 residues: Putative pyruvate, phosphate dikinase regulatory protein (273 aa).

ADP is bound at residue 153–160 (GVSRTSKT).

Belongs to the pyruvate, phosphate/water dikinase regulatory protein family. PDRP subfamily.

It catalyses the reaction N(tele)-phospho-L-histidyl/L-threonyl-[pyruvate, phosphate dikinase] + ADP = N(tele)-phospho-L-histidyl/O-phospho-L-threonyl-[pyruvate, phosphate dikinase] + AMP + H(+). The enzyme catalyses N(tele)-phospho-L-histidyl/O-phospho-L-threonyl-[pyruvate, phosphate dikinase] + phosphate + H(+) = N(tele)-phospho-L-histidyl/L-threonyl-[pyruvate, phosphate dikinase] + diphosphate. Its function is as follows. Bifunctional serine/threonine kinase and phosphorylase involved in the regulation of the pyruvate, phosphate dikinase (PPDK) by catalyzing its phosphorylation/dephosphorylation. The protein is Putative pyruvate, phosphate dikinase regulatory protein of Sinorhizobium medicae (strain WSM419) (Ensifer medicae).